The sequence spans 128 residues: Lutropin subunit beta (128 aa).

An N-terminal signal peptide occupies residues 1–20; it reads MERLQGLLLWLLLSPSVVWA. Cystine bridges form between C29–C77, C43–C92, C54–C108, C58–C110, and C113–C120. The N-linked (GlcNAc...) asparagine glycan is linked to N33.

The protein belongs to the glycoprotein hormones subunit beta family. In terms of assembly, heterodimer of a common alpha chain and a unique beta chain which confers biological specificity to thyrotropin, lutropin, follitropin and gonadotropin.

The protein resides in the secreted. Its function is as follows. Promotes spermatogenesis and ovulation by stimulating the testes and ovaries to synthesize steroids. This chain is Lutropin subunit beta (LHB), found in Phodopus sungorus (Striped hairy-footed hamster).